The chain runs to 215 residues: MFEIKLNDRITEFLRKFKNSAKSNEGIDEDIDLFLKRHAIPMQSLLFYVKEYRKDSDLQCSIKELLKPLEFEFKPKAVRGLHYSEDFKKKLEFLKYQEQELEYQSMVKRSKSVFSLQEDDELTPSQINKQIKEQVTTVFNVLVSVISVVVAIWYWTGSSTNFPVHVRLLLCLFFGILVLVADVVVYNSYLKKLEEAKVKEKTKVEKKKVLSKITL.

Residues 1–134 lie on the Cytoplasmic side of the membrane; it reads MFEIKLNDRI…SQINKQIKEQ (134 aa). The helical transmembrane segment at 135–155 threads the bilayer; the sequence is VTTVFNVLVSVISVVVAIWYW. Residues 156-167 lie on the Lumenal side of the membrane; it reads TGSSTNFPVHVR. A helical membrane pass occupies residues 168-186; sequence LLLCLFFGILVLVADVVVY. Over 187–215 the chain is Cytoplasmic; it reads NSYLKKLEEAKVKEKTKVEKKKVLSKITL.

Its subcellular location is the endoplasmic reticulum membrane. In terms of biological role, required for vacuolar ATPase assembly. The protein is Vacuolar ATPase assembly integral membrane protein VPH2 (VPH2) of Saccharomyces cerevisiae (strain ATCC 204508 / S288c) (Baker's yeast).